We begin with the raw amino-acid sequence, 153 residues long: ORM1-like protein 3 (153 aa).

Residues 1–17 are important for ceramide level-sensing; sequence MNVGTAHSEVNPNTRVM. At 1–21 the chain is on the cytoplasmic side; the sequence is MNVGTAHSEVNPNTRVMNSRG. A run of 2 helical transmembrane segments spans residues 22 to 42 and 43 to 63; these read IWLSYVLAIGLLHVVLLSIPF and VSVPVVWTLTNLIHNLGMYIF. The Cytoplasmic segment spans residues 64 to 94; it reads LHTVKGTPFETPDQGKARLLTHWEQMDYGVQ. The helical transmembrane segment at 95 to 117 threads the bilayer; sequence FTASRKFLTITPIVLYFLTSFYT. Topologically, residues 118–121 are extracellular; it reads KYDQ. A helical transmembrane segment spans residues 122–142; it reads VHFILNTVSLMSVLIPKLPQL. Hydroxyproline is present on proline 137. The Cytoplasmic portion of the chain corresponds to 143–153; the sequence is HGVRIFGINKY.

The protein belongs to the ORM family. Ceramide-sensitive subunit of the serine palmitoyltransferase (SPT) complex, which is also composed of SPTLC1, SPTLC2/3 and SPTSSA/B. In terms of processing, when hydroxylated at Pro-137, ubiquitinated via 'Lys-48'-linkage, leading to proteasomal degradation. In endothelial cells, ORMDL3 proteasomal degradation is controlled by the sphingosine 1-phosphate receptor signaling pathway.

It localises to the endoplasmic reticulum membrane. Plays an essential role in the homeostatic regulation of sphingolipid de novo biosynthesis by modulating the activity of the serine palmitoyltransferase (SPT) in response to ceramide levels. When complexed to SPT, the binding of ceramides to its N-terminus stabilizes a conformation that block SPT substrate entry, hence preventing SPT catalytic activity. Through this mechanism, maintains ceramide levels at sufficient concentrations for the production of complex sphingolipids, but which prevents the accumulation of ceramides to levels that trigger apoptosis. This is ORM1-like protein 3 (Ormdl3) from Rattus norvegicus (Rat).